Reading from the N-terminus, the 134-residue chain is ATP synthase epsilon chain (134 aa).

Belongs to the ATPase epsilon chain family. In terms of assembly, F-type ATPases have 2 components, CF(1) - the catalytic core - and CF(0) - the membrane proton channel. CF(1) has five subunits: alpha(3), beta(3), gamma(1), delta(1), epsilon(1). CF(0) has three main subunits: a, b and c.

The protein localises to the cell membrane. Functionally, produces ATP from ADP in the presence of a proton gradient across the membrane. The chain is ATP synthase epsilon chain from Listeria monocytogenes serotype 4a (strain HCC23).